Consider the following 351-residue polypeptide: uncharacterized protein (351 aa).

A disordered region spans residues 25-67 (KKAETETLPPANSQPAAPAPEAKPTEAPVAKAEAKPETPAQPV). Positions 33 to 55 (PPANSQPAAPAPEAKPTEAPVAK) are enriched in low complexity.

This is an uncharacterized protein from Escherichia coli (strain K12).